Reading from the N-terminus, the 88-residue chain is Large ribosomal subunit protein bL27 (88 aa).

The span at 1–13 (MATKKSGGSSSNG) shows a compositional bias: low complexity. The disordered stretch occupies residues 1 to 24 (MATKKSGGSSSNGRDSRGRRLGVK).

Belongs to the bacterial ribosomal protein bL27 family.

In Ehrlichia ruminantium (strain Gardel), this protein is Large ribosomal subunit protein bL27.